We begin with the raw amino-acid sequence, 427 residues long: Enolase (427 aa).

Gln163 contributes to the (2R)-2-phosphoglycerate binding site. Glu205 (proton donor) is an active-site residue. 3 residues coordinate Mg(2+): Asp242, Glu285, and Asp312. Positions 337, 366, 367, and 388 each coordinate (2R)-2-phosphoglycerate. Lys337 (proton acceptor) is an active-site residue.

Belongs to the enolase family. Requires Mg(2+) as cofactor.

Its subcellular location is the cytoplasm. It is found in the secreted. The protein resides in the cell surface. It carries out the reaction (2R)-2-phosphoglycerate = phosphoenolpyruvate + H2O. The protein operates within carbohydrate degradation; glycolysis; pyruvate from D-glyceraldehyde 3-phosphate: step 4/5. Functionally, catalyzes the reversible conversion of 2-phosphoglycerate (2-PG) into phosphoenolpyruvate (PEP). It is essential for the degradation of carbohydrates via glycolysis. This chain is Enolase, found in Burkholderia ambifaria (strain MC40-6).